A 130-amino-acid chain; its full sequence is Small ribosomal subunit protein uS11 (130 aa).

The interval 109-130 (EDVTPIPHDGTGRPGGKRGRRV) is disordered.

This sequence belongs to the universal ribosomal protein uS11 family. As to quaternary structure, part of the 30S ribosomal subunit.

Its function is as follows. Located on the platform of the 30S subunit. The protein is Small ribosomal subunit protein uS11 of Methanosphaera stadtmanae (strain ATCC 43021 / DSM 3091 / JCM 11832 / MCB-3).